We begin with the raw amino-acid sequence, 76 residues long: Brevinin-2ISb (76 aa).

The signal sequence occupies residues 1–22; sequence MFTMKKSLLVLFFLGTISLSLC. Positions 23-41 are cleaved as a propeptide — removed in mature form; the sequence is QEERNADEEDGGEATEEEV. Cysteines 70 and 76 form a disulfide.

As to expression, expressed by the skin glands.

Its subcellular location is the secreted. Its function is as follows. Has antimicrobial activity against Gram-negative bacterium E.coli ATCC 8739 (MIC=12.5 ug), against Gram positive bacteria S.aureus ATCC 6538 (MIC=6.3 ug) and B.subtilis ATCC 6633 (MIC=25 ug). Has no activity against methicillin-resistant S.aureus ATCC 43300 (MIC= ug) and fungus C.albicans ATCC 90028. The polypeptide is Brevinin-2ISb (Odorrana ishikawae (Ishikawa's frog)).